The primary structure comprises 1544 residues: Rho guanine nucleotide exchange factor 12 (1544 aa).

Residues 1 to 62 (MSGTQSTITD…KTKSSSEESR (62 aa)) are disordered. Residue Ser-2 is modified to N-acetylserine. Over residues 28–45 (SPTDKKQKVERIASHDFD) the composition is skewed to basic and acidic residues. Ser-41 carries the phosphoserine modification. Positions 72–151 (CVIIQKDDNG…LTVQGRPPGS (80 aa)) constitute a PDZ domain. Residues 194 to 262 (MGEENNVVHN…LSKATGSAQD (69 aa)) adopt a coiled-coil conformation. The segment at 247–346 (PQLQEQLSKA…SLVGSPSTRI (100 aa)) is disordered. Polar residues-rich tracts occupy residues 249 to 260 (LQEQLSKATGSA) and 293 to 309 (DCSS…NADS). Ser-309 is modified (phosphoserine). Residues 313 to 329 (GPKERIYLEENPEKSET) are compositionally biased toward basic and acidic residues. Positions 330–344 (IQDTDTQSLVGSPST) are enriched in polar residues. A Phosphoserine modification is found at Ser-341. Residues 367–558 (GQCSCFQSIE…LMYMKHLGVK (192 aa)) enclose the RGSL domain. Positions 570-706 (GRIGFLPKIK…GDTLDGTPRT (137 aa)) are disordered. Positions 582-592 (MKKDKEGEEKG) are enriched in basic and acidic residues. Residues 631–640 (STPSSVSPEP) are compositionally biased toward polar residues. Ser-637 is modified (phosphoserine). The segment covering 663–676 (ANSMSSVASGASFS) has biased composition (low complexity). Thr-736 carries the post-translational modification Phosphothreonine. A DH domain is found at 787 to 977 (KRQEVINELF…RQILNYVNQA (191 aa)). In terms of domain architecture, PH spans 1019-1132 (KMIHEGPLVW…WQDLICRMAA (114 aa)). The segment covering 1138–1149 (STKPIPLPQSTP) has biased composition (polar residues). The tract at residues 1138–1179 (STKPIPLPQSTPGEGDNDEEDPSKLKEEQHGISVTGLQSPDR) is disordered. Ser-1288, Ser-1327, Ser-1377, Ser-1457, and Ser-1541 each carry phosphoserine.

Interacts with GNA12 and GNA13, probably through the RGS-like domain. Interacts with RHOA, PLXNB1 and PLXNB2. Interacts through its PDZ domain with IGF1R beta subunit. Interacts with GCSAM. Found in a complex with ARHGEF11 and ARHGEF12; binding to ARHGEF11 and ARHGEF12 enhances CDC42 GEF activity of PLEKHG4B, and PLEKHG4B, in turn, inhibits ARHGEF11- and ARHGEF12-mediated RHOA activation. In terms of tissue distribution, ubiquitously expressed. Isoform 2 is found in jejunum and testis.

Its subcellular location is the cytoplasm. The protein localises to the membrane. Its function is as follows. May play a role in the regulation of RhoA GTPase by guanine nucleotide-binding alpha-12 (GNA12) and alpha-13 (GNA13). Acts as guanine nucleotide exchange factor (GEF) for RhoA GTPase and may act as GTPase-activating protein (GAP) for GNA12 and GNA13. The polypeptide is Rho guanine nucleotide exchange factor 12 (ARHGEF12) (Homo sapiens (Human)).